The following is a 490-amino-acid chain: Lysine--tRNA ligase (490 aa).

Mg(2+)-binding residues include Glu400 and Glu407.

This sequence belongs to the class-II aminoacyl-tRNA synthetase family. In terms of assembly, homodimer. The cofactor is Mg(2+).

It localises to the cytoplasm. It catalyses the reaction tRNA(Lys) + L-lysine + ATP = L-lysyl-tRNA(Lys) + AMP + diphosphate. The sequence is that of Lysine--tRNA ligase (lysS) from Mycoplasma genitalium (strain ATCC 33530 / DSM 19775 / NCTC 10195 / G37) (Mycoplasmoides genitalium).